Consider the following 184-residue polypeptide: ATP synthase subunit b 1 (184 aa).

Residues 4 to 24 (LSILAALAASPAMAATGPFFS) form a helical membrane-spanning segment.

Belongs to the ATPase B chain family. F-type ATPases have 2 components, F(1) - the catalytic core - and F(0) - the membrane proton channel. F(1) has five subunits: alpha(3), beta(3), gamma(1), delta(1), epsilon(1). F(0) has three main subunits: a(1), b(2) and c(10-14). The alpha and beta chains form an alternating ring which encloses part of the gamma chain. F(1) is attached to F(0) by a central stalk formed by the gamma and epsilon chains, while a peripheral stalk is formed by the delta and b chains.

Its subcellular location is the cell inner membrane. Functionally, f(1)F(0) ATP synthase produces ATP from ADP in the presence of a proton or sodium gradient. F-type ATPases consist of two structural domains, F(1) containing the extramembraneous catalytic core and F(0) containing the membrane proton channel, linked together by a central stalk and a peripheral stalk. During catalysis, ATP synthesis in the catalytic domain of F(1) is coupled via a rotary mechanism of the central stalk subunits to proton translocation. In terms of biological role, component of the F(0) channel, it forms part of the peripheral stalk, linking F(1) to F(0). This chain is ATP synthase subunit b 1, found in Cereibacter sphaeroides (strain ATCC 17025 / ATH 2.4.3) (Rhodobacter sphaeroides).